A 489-amino-acid polypeptide reads, in one-letter code: Leukocyte immunoglobulin-like receptor subfamily A member 1 (489 aa).

Residues Met-1–Gly-16 form the signal peptide. Topologically, residues Pro-17–Asn-461 are extracellular. Ig-like C2-type domains follow at residues Pro-27–Leu-116, Thr-119–Lys-224, Pro-226–Asp-315, and Pro-326–Leu-415. Cys-49 and Cys-98 are joined by a disulfide. The N-linked (GlcNAc...) asparagine glycan is linked to Asn-140. 3 cysteine pairs are disulfide-bonded: Cys-145–Cys-197, Cys-157–Cys-167, and Cys-246–Cys-297. Asn-281, Asn-302, and Asn-341 each carry an N-linked (GlcNAc...) asparagine glycan. Cys-346 and Cys-397 form a disulfide bridge. Residues Thr-425 to His-453 form a disordered region. Residues Asn-431 and Asn-448 are each glycosylated (N-linked (GlcNAc...) asparagine). Polar residues predominate over residues Asn-441 to His-453. The chain crosses the membrane as a helical span at residues Leu-462 to Ala-482. At Gln-483–Leu-489 the chain is on the cytoplasmic side.

As to expression, detected in monocytes and B-cells.

Its subcellular location is the membrane. Functionally, may act as receptor for class I MHC antigens. The polypeptide is Leukocyte immunoglobulin-like receptor subfamily A member 1 (LILRA1) (Homo sapiens (Human)).